The sequence spans 427 residues: Rhodocoxin reductase (427 aa).

2 to 34 (SIVIIGSGQAGFEAAVSLRSHGFSGTITLVGDE) lines the FAD pocket. Residue 144–172 (SLVVIGAGFIGLEVAAAARKKGLDVTVVE) coordinates NAD(+).

The protein belongs to the FAD-dependent oxidoreductase family. It depends on FAD as a cofactor.

Functionally, the degradation of the thiocarbamate herbicide EPTC by cytochrome CYP116 (thcB) requires the participation of a flavoprotein, rhodocoxin reductase, and an iron-sulfur protein, rhodocoxin, to mediate the transfer of electrons from NADH to P450 for oxygen activation. This Rhodococcus erythropolis (Arthrobacter picolinophilus) protein is Rhodocoxin reductase (thcD).